A 185-amino-acid chain; its full sequence is Elongation factor P (185 aa).

It belongs to the elongation factor P family.

Its subcellular location is the cytoplasm. Its pathway is protein biosynthesis; polypeptide chain elongation. In terms of biological role, involved in peptide bond synthesis. Stimulates efficient translation and peptide-bond synthesis on native or reconstituted 70S ribosomes in vitro. Probably functions indirectly by altering the affinity of the ribosome for aminoacyl-tRNA, thus increasing their reactivity as acceptors for peptidyl transferase. The protein is Elongation factor P of Syntrophomonas wolfei subsp. wolfei (strain DSM 2245B / Goettingen).